The sequence spans 309 residues: Ribosomal RNA small subunit methyltransferase H (309 aa).

Residues 33 to 35 (GGH), Asp-53, Phe-79, Asp-100, and Gln-107 each bind S-adenosyl-L-methionine.

The protein belongs to the methyltransferase superfamily. RsmH family.

It is found in the cytoplasm. The enzyme catalyses cytidine(1402) in 16S rRNA + S-adenosyl-L-methionine = N(4)-methylcytidine(1402) in 16S rRNA + S-adenosyl-L-homocysteine + H(+). Its function is as follows. Specifically methylates the N4 position of cytidine in position 1402 (C1402) of 16S rRNA. In Clostridium botulinum (strain Loch Maree / Type A3), this protein is Ribosomal RNA small subunit methyltransferase H.